Here is a 490-residue protein sequence, read N- to C-terminus: Cytochrome P450 2C2 (490 aa).

Heme is bound at residue Cys-435.

Belongs to the cytochrome P450 family. Requires heme as cofactor.

The protein localises to the endoplasmic reticulum membrane. Its subcellular location is the microsome membrane. It catalyses the reaction an organic molecule + reduced [NADPH--hemoprotein reductase] + O2 = an alcohol + oxidized [NADPH--hemoprotein reductase] + H2O + H(+). Its function is as follows. Cytochromes P450 are a group of heme-thiolate monooxygenases. In liver microsomes, this enzyme is involved in an NADPH-dependent electron transport pathway. It oxidizes a variety of structurally unrelated compounds, including steroids, fatty acids, and xenobiotics. In the epoxidation of arachidonic acid it generates only 14,15- and 11,12-cis-epoxyeicosatrienoic acids. This Oryctolagus cuniculus (Rabbit) protein is Cytochrome P450 2C2 (CYP2C2).